Reading from the N-terminus, the 530-residue chain is MMLTSAILLLTLGVQLSHADDSSRENFSNRCDQLAKEIHIPNVTVNFVEYVANGTNVTLADNPPSCGQSNQVVLADLCRVAMEVTTSNQSQITLEAWFPENYTGRFLSTGNGGLAGCIQYVDMAYASSMGFATVGANGGHNGTSGESFYHNPDIVEDLSWRSVHTGVVVGKELTKKFYHEGFHKSYYLGCSTGGRQGFKAVQEFVHDFDGVVAGCPAFNFVNLNSWSGHFYPITGNSSADTFLTTAQWTLVQQSVMEQCDSLDGAVDGVIEAIDQCHPVFEQLICRPGQNASECLTGKQVNTAQLVLSPIYGTKGEFLYPRMQPGVENVDMYITYNGDPFAYSTDWYKYVVFSDPNWDPATLNAQDYEIALAQNPSNIQTFEGDLSAFRDAGAKVLTYHGTADPIITGETSKVYYRHVAETMNAAPEELDEFYRYFRIGGMSHCGGGTGATAIGNVLSAQWSNDPDANVLMAMVRWVEEGVAPEYIRGASLGSGPGAKVEYTRRHCKYPTRNVYVGPGNWTDENAWKCIL.

A signal peptide spans 1 to 25 (MMLTSAILLLTLGVQLSHADDSSRE). 6 disulfide bridges follow: cysteine 31–cysteine 78, cysteine 66–cysteine 117, cysteine 190–cysteine 444, cysteine 259–cysteine 276, cysteine 285–cysteine 294, and cysteine 506–cysteine 528. Serine 191 acts as the Acyl-ester intermediate in catalysis. Residues aspartate 260, aspartate 263, alanine 265, aspartate 267, and valine 269 each coordinate Ca(2+). Residues aspartate 403 and histidine 443 each act as charge relay system in the active site.

The protein belongs to the tannase family.

It localises to the secreted. It catalyses the reaction feruloyl-polysaccharide + H2O = ferulate + polysaccharide.. Functionally, involved in degradation of plant cell walls. Hydrolyzes the feruloyl-arabinose ester bond in arabinoxylans as well as the feruloyl-galactose and feruloyl-arabinose ester bonds in pectin. Active against methyl esters of sinapate (MSA) and caffeate (MCA). The protein is Feruloyl esterase C (faeC) of Talaromyces stipitatus (strain ATCC 10500 / CBS 375.48 / QM 6759 / NRRL 1006) (Penicillium stipitatum).